The following is a 434-amino-acid chain: DENN domain-containing protein 11 (434 aa).

The segment at 1–29 (MARRTDRAPLLDWAEGPGVSPAPETEQGE) is disordered. One can recognise a uDENN domain in the interval 1 to 168 (MARRTDRAPL…QLEIPGHYTP (168 aa)). The region spanning 194–341 (LPPVHKHLYP…VNSADKEKYQ (148 aa)) is the cDENN domain. The region spanning 343–434 (LNDQRQLLMY…MLVIDNPCCP (92 aa)) is the dDENN domain.

The protein belongs to the DENND11 family.

Functionally, probable guanine nucleotide exchange factor (GEF). May promote the exchange of GDP to GTP, converting inactive GDP-bound small GTPases into their active GTP-bound form. The chain is DENN domain-containing protein 11 (dennd11) from Xenopus laevis (African clawed frog).